The sequence spans 312 residues: Malate dehydrogenase (312 aa).

NAD(+) contacts are provided by residues 7–13 (GAAGGIG) and aspartate 34. Substrate is bound by residues arginine 81 and arginine 87. Residues asparagine 94 and 117-119 (ITN) contribute to the NAD(+) site. Substrate is bound by residues asparagine 119 and arginine 153. Histidine 177 (proton acceptor) is an active-site residue. Position 227 (methionine 227) interacts with NAD(+).

This sequence belongs to the LDH/MDH superfamily. MDH type 1 family. As to quaternary structure, homodimer.

The enzyme catalyses (S)-malate + NAD(+) = oxaloacetate + NADH + H(+). Catalyzes the reversible oxidation of malate to oxaloacetate. The sequence is that of Malate dehydrogenase from Photorhabdus laumondii subsp. laumondii (strain DSM 15139 / CIP 105565 / TT01) (Photorhabdus luminescens subsp. laumondii).